A 500-amino-acid chain; its full sequence is L-arabinose isomerase (500 aa).

Mn(2+) contacts are provided by glutamate 306, glutamate 333, histidine 350, and histidine 450.

The protein belongs to the arabinose isomerase family. As to quaternary structure, homohexamer. Mn(2+) serves as cofactor.

The catalysed reaction is beta-L-arabinopyranose = L-ribulose. It functions in the pathway carbohydrate degradation; L-arabinose degradation via L-ribulose; D-xylulose 5-phosphate from L-arabinose (bacterial route): step 1/3. Functionally, catalyzes the conversion of L-arabinose to L-ribulose. This is L-arabinose isomerase from Salmonella typhi.